A 386-amino-acid polypeptide reads, in one-letter code: Phosphoglycerate kinase (386 aa).

Residues 21-23 (DLN), Arg36, 59-62 (HLGR), Arg112, and Arg145 contribute to the substrate site. ATP contacts are provided by residues Lys196, Glu313, and 339 to 342 (GGDT).

The protein belongs to the phosphoglycerate kinase family. As to quaternary structure, monomer.

The protein resides in the cytoplasm. It carries out the reaction (2R)-3-phosphoglycerate + ATP = (2R)-3-phospho-glyceroyl phosphate + ADP. It participates in carbohydrate degradation; glycolysis; pyruvate from D-glyceraldehyde 3-phosphate: step 2/5. The sequence is that of Phosphoglycerate kinase from Haemophilus influenzae (strain PittEE).